An 840-amino-acid chain; its full sequence is Phosphatidylinositol-glycan-specific phospholipase D (840 aa).

The first 23 residues, M1–P23, serve as a signal peptide directing secretion. 5 N-linked (GlcNAc...) asparagine glycosylation sites follow: N94, N271, N292, N307, and N321. FG-GAP repeat units follow at residues S367 to P428, E436 to S497, S499 to K559, N563 to R623, Q633 to R693, L704 to D770, and Q788 to D840. Residues N501, N568, N591, N604, and N659 are each glycosylated (N-linked (GlcNAc...) asparagine).

The protein belongs to the GPLD1 family. As to quaternary structure, monomer.

It localises to the secreted. The enzyme catalyses a 6-(alpha-D-glucosaminyl)-1-(1,2-diacyl-sn-glycero-3-phospho)-1D-myo-inositol + H2O = 6-(alpha-D-glucosaminyl)-1D-myo-inositol + a 1,2-diacyl-sn-glycero-3-phosphate + H(+). Functionally, this protein hydrolyzes the inositol phosphate linkage in proteins anchored by phosphatidylinositol glycans (GPI-anchor) thus releasing these proteins from the membrane. The polypeptide is Phosphatidylinositol-glycan-specific phospholipase D (GPLD1) (Homo sapiens (Human)).